The following is a 90-amino-acid chain: Phosphocarrier protein NPr (90 aa).

The HPr domain occupies Thr2–Asp90. The active-site Pros-phosphohistidine intermediate is His16.

It belongs to the HPr family.

Its subcellular location is the cytoplasm. Component of the phosphoenolpyruvate-dependent nitrogen-metabolic phosphotransferase system (nitrogen-metabolic PTS), that seems to be involved in regulating nitrogen metabolism. The phosphoryl group from phosphoenolpyruvate (PEP) is transferred to the phosphoryl carrier protein NPr by enzyme I-Ntr. Phospho-NPr then transfers it to EIIA-Ntr. Could function in the transcriptional regulation of sigma-54 dependent operons in conjunction with the NPr (PtsO) and EIIA-Ntr (PtsN) proteins. The chain is Phosphocarrier protein NPr (ptsO) from Klebsiella oxytoca.